Here is a 747-residue protein sequence, read N- to C-terminus: Ion-translocating oxidoreductase complex subunit C (747 aa).

4Fe-4S ferredoxin-type domains lie at 368-397 (MEPV…QQLY) and 407-436 (KARN…VQYY). Cys377, Cys380, Cys383, Cys387, Cys416, Cys419, Cys422, and Cys426 together coordinate [4Fe-4S] cluster. The disordered stretch occupies residues 538-564 (VREERARENQTQQETPTVDVPSTELDD).

It belongs to the 4Fe4S bacterial-type ferredoxin family. RnfC subfamily. As to quaternary structure, the complex is composed of six subunits: RnfA, RnfB, RnfC, RnfD, RnfE and RnfG. The cofactor is [4Fe-4S] cluster.

Its subcellular location is the cell inner membrane. Its function is as follows. Part of a membrane-bound complex that couples electron transfer with translocation of ions across the membrane. The polypeptide is Ion-translocating oxidoreductase complex subunit C (Pectobacterium carotovorum subsp. carotovorum (strain PC1)).